The following is a 556-amino-acid chain: MTQTPDATGAAADARWLARRRGALACVALAPVAQALGRVERVADGIAFVSGLEDAMLNEVLRFDGGVTGFAHTLDEDLISVVLLDPDAGVQAQTAVTRTGAVLEVPVGPQLLGRVVDPLGRPLDGGAPLGTADTLPIERPAPEIIERDLVSEPLDTGVLIVDALFTIGRGQRELIIGDRATGKTSLAIDAIVNQRHSDVICVYVAIGQRASAVRRVIDAVRRYGAPERCIFVVAPAACAPGLQWIAPFAGFSVAEYFRDRGQHALVVVDDLTKHAATHRELALLTREPPGREAYPGDIFYVHARLLERAAKLSAKLGGGSLSALPIAETDAGNLAAYIPTNLISITDGQIVLDSALFAANQRPAVDVGLSVSRVGGKAQHPALRAASGRLRLDYAQFLELEAFTRFGGLTDARLRAQITRGERIRALITQPRFRALRTLDEVVLLKALAAGVLDAMSPDLVAPLRERLPSWLDARLAPPRDRLADDAALSMLAESIGELVERVAADAAHRAAAGGHAEDAADDMGGALDGEHASGDATSIAPTPPGGAEAGAPRKR.

An ATP-binding site is contributed by G177–T184. Residues G514 to R556 are disordered. Residues G546–R556 show a composition bias toward low complexity.

It belongs to the ATPase alpha/beta chains family. F-type ATPases have 2 components, CF(1) - the catalytic core - and CF(0) - the membrane proton channel. CF(1) has five subunits: alpha(3), beta(3), gamma(1), delta(1), epsilon(1). CF(0) has three main subunits: a(1), b(2) and c(9-12). The alpha and beta chains form an alternating ring which encloses part of the gamma chain. CF(1) is attached to CF(0) by a central stalk formed by the gamma and epsilon chains, while a peripheral stalk is formed by the delta and b chains.

It localises to the cell inner membrane. It catalyses the reaction ATP + H2O + 4 H(+)(in) = ADP + phosphate + 5 H(+)(out). Functionally, produces ATP from ADP in the presence of a proton gradient across the membrane. The alpha chain is a regulatory subunit. The protein is ATP synthase subunit alpha 2 of Burkholderia thailandensis (strain ATCC 700388 / DSM 13276 / CCUG 48851 / CIP 106301 / E264).